A 204-amino-acid polypeptide reads, in one-letter code: Secreted phosphoprotein 24 (204 aa).

Positions 1–23 (MEKRAMRMLAMFVLGTSFWSCAG) are cleaved as a signal peptide. Intrachain disulfides connect cysteine 86/cysteine 97 and cysteine 110/cysteine 128. Residue serine 90 is modified to Phosphoserine. Residues serine 138, serine 139, serine 166, and serine 175 each carry the phosphoserine modification. The interval 179–204 (MRRFPPPGNRSFPNQWPRARTNTGFE) is disordered.

It belongs to the SPP2 family. In terms of processing, multiply phosphorylated at serine residues. Post-translationally, phosphorylation sites are present in the extracellular medium.

It is found in the secreted. Its function is as follows. Could coordinate an aspect of bone turnover. The chain is Secreted phosphoprotein 24 (SPP2) from Sus scrofa (Pig).